A 126-amino-acid chain; its full sequence is Acidic phospholipase A2 S1E6-b (126 aa).

An N-terminal signal peptide occupies residues 1–3; it reads VEG. Disulfide bonds link Cys29–Cys119, Cys31–Cys47, Cys46–Cys98, Cys52–Cys126, Cys53–Cys91, Cys60–Cys84, and Cys78–Cys89. Ca(2+)-binding residues include Tyr30, Gly32, and Gly34. His50 is a catalytic residue. Asp51 is a binding site for Ca(2+). Asp92 is a catalytic residue.

Homodimer. Requires Ca(2+) as cofactor. As to expression, expressed by the venom gland.

The protein localises to the secreted. The enzyme catalyses a 1,2-diacyl-sn-glycero-3-phosphocholine + H2O = a 1-acyl-sn-glycero-3-phosphocholine + a fatty acid + H(+). Its function is as follows. Snake venom phospholipase that inhibits ADP-induced platelet aggregation. PLA2 catalyzes the calcium-dependent hydrolysis of the 2-acyl groups in 3-sn-phosphoglycerides. The polypeptide is Acidic phospholipase A2 S1E6-b (Calloselasma rhodostoma (Malayan pit viper)).